The chain runs to 164 residues: Xanthine-guanine phosphoribosyltransferase (164 aa).

5-phospho-alpha-D-ribose 1-diphosphate contacts are provided by residues 41–42 and 98–106; these read RG and DDLTDTGKT. Aspartate 99 is a binding site for Mg(2+). The guanine site is built by aspartate 102 and isoleucine 145. Residues aspartate 102 and isoleucine 145 each coordinate xanthine. GMP is bound by residues 102–106 and 144–145; these read DTGKT and WI.

Belongs to the purine/pyrimidine phosphoribosyltransferase family. XGPT subfamily. In terms of assembly, homotetramer. It depends on Mg(2+) as a cofactor.

It localises to the cell inner membrane. The enzyme catalyses GMP + diphosphate = guanine + 5-phospho-alpha-D-ribose 1-diphosphate. It carries out the reaction XMP + diphosphate = xanthine + 5-phospho-alpha-D-ribose 1-diphosphate. It catalyses the reaction IMP + diphosphate = hypoxanthine + 5-phospho-alpha-D-ribose 1-diphosphate. It functions in the pathway purine metabolism; GMP biosynthesis via salvage pathway; GMP from guanine: step 1/1. The protein operates within purine metabolism; XMP biosynthesis via salvage pathway; XMP from xanthine: step 1/1. Purine salvage pathway enzyme that catalyzes the transfer of the ribosyl-5-phosphate group from 5-phospho-alpha-D-ribose 1-diphosphate (PRPP) to the N9 position of the 6-oxopurines guanine and xanthine to form the corresponding ribonucleotides GMP (guanosine 5'-monophosphate) and XMP (xanthosine 5'-monophosphate), with the release of PPi. To a lesser extent, also acts on hypoxanthine. The chain is Xanthine-guanine phosphoribosyltransferase from Rhizobium johnstonii (strain DSM 114642 / LMG 32736 / 3841) (Rhizobium leguminosarum bv. viciae).